A 308-amino-acid polypeptide reads, in one-letter code: Oxygen-dependent coproporphyrinogen-III oxidase (308 aa).

Serine 100 provides a ligand contact to substrate. A divalent metal cation contacts are provided by histidine 104 and histidine 114. Histidine 114 (proton donor) is an active-site residue. 116-118 (NFR) lines the substrate pocket. 2 residues coordinate a divalent metal cation: histidine 153 and histidine 183. Positions 248 to 283 (YVEFNLVFDRGTIFGLQSGGRTESILSSMPPIATWK) are important for dimerization. Position 266–268 (266–268 (GGR)) interacts with substrate.

The protein belongs to the aerobic coproporphyrinogen-III oxidase family. As to quaternary structure, homodimer. It depends on a divalent metal cation as a cofactor.

The protein resides in the cytoplasm. It carries out the reaction coproporphyrinogen III + O2 + 2 H(+) = protoporphyrinogen IX + 2 CO2 + 2 H2O. It participates in porphyrin-containing compound metabolism; protoporphyrin-IX biosynthesis; protoporphyrinogen-IX from coproporphyrinogen-III (O2 route): step 1/1. Its function is as follows. Involved in the heme biosynthesis. Catalyzes the aerobic oxidative decarboxylation of propionate groups of rings A and B of coproporphyrinogen-III to yield the vinyl groups in protoporphyrinogen-IX. The polypeptide is Oxygen-dependent coproporphyrinogen-III oxidase (Francisella tularensis subsp. tularensis (strain FSC 198)).